Here is a 7388-residue protein sequence, read N- to C-terminus: Microtubule-actin cross-linking factor 1, isoforms 1/2/3/4/5 (7388 aa).

A disordered region spans residues 1 to 47; it reads MSSSDEETLSERSCRSERSCRSERSYRSERSGSLSPCPPGDTLPWNL. The interval 1–295 is actin-binding; it reads MSSSDEETLS…VITYVSSIYD (295 aa). Serine 4 carries the phosphoserine modification. The span at 9–30 shows a compositional bias: basic and acidic residues; sequence LSERSCRSERSCRSERSYRSER. Phosphoserine occurs at positions 35 and 57. Calponin-homology (CH) domains are found at residues 78 to 181 and 194 to 298; these read RVQK…LHFQ and MSAK…DAFP. LRR repeat units lie at residues 148–171 and 240–264; these read QRQV…LTLG and LVDM…VAER. A Phosphoserine modification is found at serine 280. LRR repeat units lie at residues 377–399 and 441–464; these read LYKL…YHPN and LNCE…LESG. Phosphoserine is present on serine 814. One can recognise an SH3 domain in the interval 868–925; it reads KNTISVKAVCDYRQIEITICKNDECVLEDNSQRTKWKVISPTGNEAMVPSVCFLIPPP. The stretch at 1050–1073 is one LRR 5 repeat; that stretch reads ISELKNIRLRLEEYEQRVVKRIQS. Serine 1122 carries the phosphoserine modification. LRR repeat units follow at residues 1128-1154, 1187-1210, and 1257-1282; these read VPTL…VYLN, LADL…VKDK, and HRVI…DYRA. Residues serine 1367 and serine 1376 each carry the phosphoserine modification. Plectin repeat units follow at residues 1577 to 1621, 1654 to 1696, 1769 to 1809, 1811 to 1848, and 1855 to 1886; these read LVLL…RELQ, LKIL…VLES, RLLE…CAIL, RQLQ…VILE, and GLLW…KILS. Phosphoserine occurs at positions 2006 and 2051. The segment at 2051 to 2085 is disordered; sequence SQNKEYPDREDCTTEKGKKTTVETEDSSVENPEQD. Residues 2055-2072 show a composition bias toward basic and acidic residues; that stretch reads EYPDREDCTTEKGKKTTV. Phosphoserine is present on serine 2077. 6 Plectin repeats span residues 2290–2332, 2367–2410, 2411–2437, 2501–2543, 2581–2612, and 2686–2730; these read LNVL…KLME, NVLM…LERQ, VVTG…GLVD, RLLT…LKRV, EVQA…LTNE, and LKVL…ASHQ. Disordered regions lie at residues 3013 to 3034 and 3104 to 3174; these read EHDS…GKEA and SEPF…NECK. Positions 3115 to 3124 are enriched in basic and acidic residues; it reads EGLHYQESDG. Serine 3122 carries the phosphoserine modification. Positions 3129–3158 are enriched in polar residues; it reads TGPSQISKTDKSFQGTTRQETNYQDSWVTS. LRR repeat units lie at residues 3239-3262 and 3264-3283; these read LTGE…SIED and VTQR…LFKG. Positions 3321-3332 are enriched in basic and acidic residues; sequence EKTPQEKLRESP. The disordered stretch occupies residues 3321–3350; the sequence is EKTPQEKLRESPGSEQTPFMTAPEGKGNGG. Residue serine 3331 is modified to Phosphoserine. LRR repeat units follow at residues 3646 to 3669 and 3696 to 3720; these read QQDL…IQNR and LTAL…TRVA. Spectrin repeat units follow at residues 3883 to 3957 and 4000 to 4108; these read ELQK…NSFK and QYHQ…SLLQ. Serine 3927 bears the Phosphoserine mark. The LRR 13 repeat unit spans residues 3936-3958; sequence KGDLRFVTISGQKVLDMENSFKE. 2 LRR repeats span residues 4125-4150 and 4261-4287; these read LQSI…VIQE and IQEL…ELSS. Residues 4466–4574 form a Spectrin 3 repeat; the sequence is RMEEVHKEAN…TVARQRQLEE (109 aa). Residues serine 4495, serine 4496, and serine 4521 each carry the phosphoserine modification. LRR repeat units follow at residues 4511–4534, 4601–4624, and 4769–4792; these read KAFL…LAGL, GVLG…QFML, and KKRL…RINR. Spectrin repeat units follow at residues 4800 to 4904 and 4909 to 5012; these read TQQF…SRLK and KAQK…SLEE. Serine 4836 and serine 4962 each carry phosphoserine. LRR repeat units lie at residues 5051–5076, 5172–5194, and 5281–5304; these read NKNL…YLRN, NKIH…MLEE, and KEQV…LIQS. Spectrin repeat units follow at residues 5236-5341, 5348-5450, and 5455-5557; these read EDFY…QLQE, KFQD…QLED, and AKQF…LRTL. A Phosphothreonine modification is found at threonine 5435. A disordered region spans residues 5583 to 5603; sequence EELATSGGQSPTGEQIPQFQQ. The span at 5588–5603 shows a compositional bias: polar residues; it reads SGGQSPTGEQIPQFQQ. LRR repeat units lie at residues 5695-5719 and 5804-5828; these read MALG…AFSI and AQLP…QLRE. Spectrin repeat units follow at residues 5783–5885, 6005–6110, 6115–6219, 6225–6328, 6333–6439, 6443–6547, 6552–6658, 6665–6766, and 6771–6874; these read NQFW…ALDE, LAEK…KLED, AVQY…HKLE, LGQF…QQLQ, QAQG…KLEE, LATE…RSLD, RAKQ…KLEE, QFMD…RLEQ, and AEVF…QRLE. 2 positions are modified to phosphoserine: serine 5808 and serine 6032. The residue at position 6210 (lysine 6210) is an N6-acetyllysine. One copy of the LRR 24 repeat lies at 6496-6519; it reads RDQIIELDQTGNQLKFLSQKQDVV. Residues 6951 to 6981 are disordered; sequence PTHAPFIEKSRSGGRKSLSQPTPPPMPILSQ. Phosphoserine is present on serine 6967. EF-hand domains follow at residues 7041–7076 and 7077–7112; these read HKKS…SKFP and TTKL…NKDA. Residues aspartate 7054, aspartate 7056, aspartate 7058, lysine 7060, glutamate 7065, aspartate 7090, aspartate 7092, aspartate 7094, tyrosine 7096, and glutamate 7101 each contribute to the Ca(2+) site. In terms of domain architecture, GAR spans 7117–7189; that stretch reads TDADKIEDEV…EFLVKNDPCR (73 aa). The interval 7117-7388 is C-terminal tail; that stretch reads TDADKIEDEV…ASPRTPGPKR (272 aa). The interval 7205 to 7388 is disordered; sequence PEGASQGMTP…ASPRTPGPKR (184 aa). The span at 7225–7259 shows a compositional bias: low complexity; the sequence is SSRAASPTRSSSSASQSNHSCTSMPSSPATPASGT. Position 7254 is a phosphothreonine (threonine 7254). The segment covering 7275-7299 has biased composition (polar residues); the sequence is TFHSSRTSLAGDTSNSSSPASTGAK. Residues serine 7279 and serine 7292 each carry the phosphoserine modification. Positions 7310–7324 are enriched in low complexity; it reads SRPGSRAGSRAGSRA. Residues 7313-7328 are 4 X 4 AA tandem repeats of [GS]-S-R-[AR]; sequence GSRAGSRAGSRASSRR. Phosphoserine is present on residues serine 7330 and serine 7333. Residues 7339–7361 are compositionally biased toward polar residues; sequence ETQSACSDTSESSAAGGQGNSRR.

It belongs to the plakin or cytolinker family. Isoform 2: Interacts with MAPRE1, CLASP1, CLASP2, AXIN1 and LRP6. Isoform 2: Found in a complex composed of MACF1, APC, AXIN1, CTNNB1 and GSK3B. Isoform 2: Interacts with GOLGA4. Isoform 2: Interacts with CAMSAP3. Post-translationally, phosphorylated on serine residues in the C-terminal tail by GSK3B. Phosphorylation inhibits microtubule-binding and this plays a critical role in bulge stem cell migration and skin wound repair. Wnt-signaling can repress phosphorylation. As to expression, isoform 2: Ubiquitously expressed. Isoform 1: Expressed in cell lines NCI-H460, A-549 and HaCaT. Isoform 4: Expressed in heart, lung, pituitary and placenta, not found in brain, kidney, liver, pancreas or skeletal muscle.

Its subcellular location is the cytoplasm. It localises to the cytoskeleton. The protein localises to the golgi apparatus. It is found in the cell membrane. The protein resides in the cell projection. Its subcellular location is the ruffle membrane. In terms of biological role, F-actin-binding protein which plays a role in cross-linking actin to other cytoskeletal proteins and also binds to microtubules. Plays an important role in ERBB2-dependent stabilization of microtubules at the cell cortex. Acts as a positive regulator of Wnt receptor signaling pathway and is involved in the translocation of AXIN1 and its associated complex (composed of APC, CTNNB1 and GSK3B) from the cytoplasm to the cell membrane. Has actin-regulated ATPase activity and is essential for controlling focal adhesions (FAs) assembly and dynamics. Interaction with CAMSAP3 at the minus ends of non-centrosomal microtubules tethers microtubules minus-ends to actin filaments, regulating focal adhesion size and cell migration. May play role in delivery of transport vesicles containing GPI-linked proteins from the trans-Golgi network through its interaction with GOLGA4. Plays a key role in wound healing and epidermal cell migration. Required for efficient upward migration of bulge cells in response to wounding and this function is primarily rooted in its ability to coordinate microtubule dynamics and polarize hair follicle stem cells. As a regulator of actin and microtubule arrangement and stabilization, it plays an essential role in neurite outgrowth, branching and spine formation during brain development. This is Microtubule-actin cross-linking factor 1, isoforms 1/2/3/4/5 from Homo sapiens (Human).